The following is a 156-amino-acid chain: Small ribosomal subunit protein uS7 (156 aa).

The protein belongs to the universal ribosomal protein uS7 family. Part of the 30S ribosomal subunit. Contacts proteins S9 and S11.

Its function is as follows. One of the primary rRNA binding proteins, it binds directly to 16S rRNA where it nucleates assembly of the head domain of the 30S subunit. Is located at the subunit interface close to the decoding center, probably blocks exit of the E-site tRNA. This is Small ribosomal subunit protein uS7 from Natranaerobius thermophilus (strain ATCC BAA-1301 / DSM 18059 / JW/NM-WN-LF).